The chain runs to 421 residues: Phosphatidate cytidylyltransferase 1 (421 aa).

Met1 bears the N-acetylmethionine mark. Polar residues predominate over residues 1–12 (MEEENVTSSPST). Positions 1 to 26 (MEEENVTSSPSTPVHRLRHRRRSNEV) are disordered. 8 consecutive transmembrane segments (helical) span residues 60 to 80 (IGGF…MVVV), 102 to 122 (LPYI…FVYG), 149 to 169 (YHMA…ILTL), 183 to 203 (WTHM…ANIF), 206 to 226 (IFWF…AYIF), 246 to 266 (GFIG…NILG), 321 to 341 (LCLG…ASGF), and 369 to 389 (VMAV…SVSV).

It belongs to the CDS family. Requires Mg(2+) as cofactor.

The protein resides in the membrane. It catalyses the reaction a 1,2-diacyl-sn-glycero-3-phosphate + CTP + H(+) = a CDP-1,2-diacyl-sn-glycerol + diphosphate. It functions in the pathway phospholipid metabolism; CDP-diacylglycerol biosynthesis; CDP-diacylglycerol from sn-glycerol 3-phosphate: step 3/3. Its function is as follows. May be involved in the synthesis of minor phospholipids and in modulation of IP3-mediated signal transduction. The sequence is that of Phosphatidate cytidylyltransferase 1 from Arabidopsis thaliana (Mouse-ear cress).